Consider the following 298-residue polypeptide: Ribosomal protein L11 methyltransferase (298 aa).

S-adenosyl-L-methionine is bound by residues Thr139, Gly163, Asp185, and Asn232.

This sequence belongs to the methyltransferase superfamily. PrmA family.

It is found in the cytoplasm. The catalysed reaction is L-lysyl-[protein] + 3 S-adenosyl-L-methionine = N(6),N(6),N(6)-trimethyl-L-lysyl-[protein] + 3 S-adenosyl-L-homocysteine + 3 H(+). In terms of biological role, methylates ribosomal protein L11. The chain is Ribosomal protein L11 methyltransferase from Microcystis aeruginosa (strain NIES-843 / IAM M-2473).